The sequence spans 113 residues: Large ribosomal subunit protein bL19m (113 aa).

This sequence belongs to the bacterial ribosomal protein bL19 family.

It localises to the mitochondrion. The polypeptide is Large ribosomal subunit protein bL19m (RPL19) (Reclinomonas americana).